Consider the following 771-residue polypeptide: Probable dipeptidyl peptidase 4 (771 aa).

Positions M1–A16 are cleaved as a signal peptide. Residues N37, N80, N114, N173, N222, N470, and N495 are each glycosylated (N-linked (GlcNAc...) asparagine). Active-site charge relay system residues include S618, D695, and H730.

This sequence belongs to the peptidase S9B family.

It localises to the secreted. It catalyses the reaction Release of an N-terminal dipeptide, Xaa-Yaa-|-Zaa-, from a polypeptide, preferentially when Yaa is Pro, provided Zaa is neither Pro nor hydroxyproline.. Its function is as follows. Extracellular dipeptidyl-peptidase which removes N-terminal dipeptides sequentially from polypeptides having unsubstituted N-termini provided that the penultimate residue is proline. This is Probable dipeptidyl peptidase 4 (dpp4) from Aspergillus flavus (strain ATCC 200026 / FGSC A1120 / IAM 13836 / NRRL 3357 / JCM 12722 / SRRC 167).